The primary structure comprises 115 residues: Large ribosomal subunit protein bL20 (115 aa).

The protein belongs to the bacterial ribosomal protein bL20 family.

Functionally, binds directly to 23S ribosomal RNA and is necessary for the in vitro assembly process of the 50S ribosomal subunit. It is not involved in the protein synthesizing functions of that subunit. In Chlorobium phaeobacteroides (strain BS1), this protein is Large ribosomal subunit protein bL20.